The chain runs to 565 residues: uncharacterized protein (565 aa).

The N-terminal stretch at 1–21 (MKIPSQQVLLALPLLASPAQS) is a signal peptide. N46 and N88 each carry an N-linked (GlcNAc...) asparagine glycan. In terms of domain architecture, FAD-binding PCMH-type spans 118–302 (QGIVPYYSVS…TSVTYKTHPK (185 aa)). A Pros-8alpha-FAD histidine modification is found at H155. Residues N191, N314, N364, N371, and N484 are each glycosylated (N-linked (GlcNAc...) asparagine).

The protein belongs to the oxygen-dependent FAD-linked oxidoreductase family. The cofactor is FAD.

It is found in the secreted. This is an uncharacterized protein from Arthroderma benhamiae (strain ATCC MYA-4681 / CBS 112371) (Trichophyton mentagrophytes).